The chain runs to 306 residues: Recombination-associated protein RdgC (306 aa).

Belongs to the RdgC family.

It localises to the cytoplasm. The protein localises to the nucleoid. In terms of biological role, may be involved in recombination. This chain is Recombination-associated protein RdgC, found in Pseudomonas aeruginosa (strain ATCC 15692 / DSM 22644 / CIP 104116 / JCM 14847 / LMG 12228 / 1C / PRS 101 / PAO1).